Consider the following 93-residue polypeptide: Parbolysin P5 (93 aa).

Disulfide bonds link cysteine 16–cysteine 37, cysteine 22–cysteine 33, and cysteine 47–cysteine 60.

Belongs to the worm cytolysin family. In terms of tissue distribution, localized within the skin and proboscis and are most readily isolated from body mucus secretions.

It localises to the secreted. In terms of biological role, cytolysin that shows hemolytic activity (on bovine erythrocytes, HC(50)=5.75 mg/ml). This hemolytic activity is completely inhibited by small unilamelar vesicles composed of PC/PG, PC/PI and PC/PS in 1:1 molar ratios (with at least 100 mg/ml concentration). In Parborlasia corrugatus (Antarctic nemertean worm), this protein is Parbolysin P5.